The following is a 292-amino-acid chain: ATP synthase gamma chain (292 aa).

The protein belongs to the ATPase gamma chain family. F-type ATPases have 2 components, CF(1) - the catalytic core - and CF(0) - the membrane proton channel. CF(1) has five subunits: alpha(3), beta(3), gamma(1), delta(1), epsilon(1). CF(0) has three main subunits: a, b and c.

The protein localises to the cell inner membrane. Functionally, produces ATP from ADP in the presence of a proton gradient across the membrane. The gamma chain is believed to be important in regulating ATPase activity and the flow of protons through the CF(0) complex. The chain is ATP synthase gamma chain from Magnetococcus marinus (strain ATCC BAA-1437 / JCM 17883 / MC-1).